The sequence spans 292 residues: Rhodanese-like domain-containing protein 11, chloroplastic (292 aa).

The transit peptide at 1-56 directs the protein to the chloroplast; the sequence is MESLSLPVLNPLLASGSNLFRNQHSRMTSSMVSSLKSPIGGTSLSTVRRFGVGVVR. Positions 101-224 constitute a Rhodanese domain; that stretch reads SLSNKPLLDV…AQDEDLVTEG (124 aa). Cys-184 serves as the catalytic Cysteine persulfide intermediate.

It is found in the plastid. The protein localises to the chloroplast. The sequence is that of Rhodanese-like domain-containing protein 11, chloroplastic (STR11) from Arabidopsis thaliana (Mouse-ear cress).